Consider the following 699-residue polypeptide: Glycine--tRNA ligase beta subunit (699 aa).

Belongs to the class-II aminoacyl-tRNA synthetase family. In terms of assembly, tetramer of two alpha and two beta subunits.

The protein localises to the cytoplasm. It carries out the reaction tRNA(Gly) + glycine + ATP = glycyl-tRNA(Gly) + AMP + diphosphate. In Bradyrhizobium diazoefficiens (strain JCM 10833 / BCRC 13528 / IAM 13628 / NBRC 14792 / USDA 110), this protein is Glycine--tRNA ligase beta subunit.